The primary structure comprises 239 residues: Small ribosomal subunit protein uS2 (239 aa).

It belongs to the universal ribosomal protein uS2 family.

The protein is Small ribosomal subunit protein uS2 of Lysinibacillus sphaericus (strain C3-41).